The primary structure comprises 125 residues: Large ribosomal subunit protein eL31 (125 aa).

Methionine 1 bears the N-acetylmethionine mark. Position 15 is a phosphoserine (serine 15). Residues lysine 55 and lysine 70 each carry the N6-succinyllysine modification. Lysine 75 carries the N6-acetyllysine; alternate modification. The residue at position 75 (lysine 75) is an N6-succinyllysine; alternate. Serine 98 is subject to Phosphoserine.

The protein belongs to the eukaryotic ribosomal protein eL31 family. In terms of assembly, component of the large ribosomal subunit.

It localises to the cytoplasm. Its function is as follows. Component of the large ribosomal subunit. The ribosome is a large ribonucleoprotein complex responsible for the synthesis of proteins in the cell. The polypeptide is Large ribosomal subunit protein eL31 (RPL31) (Oryctolagus cuniculus (Rabbit)).